A 38-amino-acid polypeptide reads, in one-letter code: Putative defensin-like protein 105 (38 aa).

Cystine bridges form between Cys5-Cys27, Cys13-Cys33, and Cys17-Cys34.

Belongs to the DEFL family.

This chain is Putative defensin-like protein 105, found in Arabidopsis thaliana (Mouse-ear cress).